We begin with the raw amino-acid sequence, 347 residues long: GMP reductase (347 aa).

108 to 131 contacts NADP(+); sequence ADFIKLSEILAMSEELNFICIDIA. 2 residues coordinate K(+): G181 and G183. The active-site Thioimidate intermediate is C186. 216-239 lines the NADP(+) pocket; it reads IIGDGGCSCAGDVAKAFGGGADFV.

It belongs to the IMPDH/GMPR family. GuaC type 1 subfamily. Homotetramer.

It catalyses the reaction IMP + NH4(+) + NADP(+) = GMP + NADPH + 2 H(+). In terms of biological role, catalyzes the irreversible NADPH-dependent deamination of GMP to IMP. It functions in the conversion of nucleobase, nucleoside and nucleotide derivatives of G to A nucleotides, and in maintaining the intracellular balance of A and G nucleotides. This chain is GMP reductase, found in Shewanella halifaxensis (strain HAW-EB4).